The following is a 367-amino-acid chain: Probable L-aspartate decarboxylase (367 aa).

Lys216 carries the N6-(pyridoxal phosphate)lysine modification.

The protein belongs to the group II decarboxylase family. MfnA subfamily. Pyridoxal 5'-phosphate is required as a cofactor.

The enzyme catalyses L-aspartate + H(+) = beta-alanine + CO2. It functions in the pathway cofactor biosynthesis; coenzyme A biosynthesis. Functionally, catalyzes the decarboxylation of L-aspartate to produce beta-alanine. This Archaeoglobus fulgidus (strain ATCC 49558 / DSM 4304 / JCM 9628 / NBRC 100126 / VC-16) protein is Probable L-aspartate decarboxylase.